A 433-amino-acid polypeptide reads, in one-letter code: Keratin, type I cytoskeletal 17 (433 aa).

The disordered stretch occupies residues Met1–Ser24. The segment at Met1–Gly83 is head. Phosphoserine occurs at positions 12 and 13. Lys15 participates in a covalent cross-link: Glycyl lysine isopeptide (Lys-Gly) (interchain with G-Cter in SUMO1); alternate. Lys15 participates in a covalent cross-link: Glycyl lysine isopeptide (Lys-Gly) (interchain with G-Cter in SUMO2); alternate. Phosphoserine is present on residues Ser25, Ser32, Ser34, and Ser39. At Ser44 the chain carries Phosphoserine; by RPS6KA1. The coil 1A stretch occupies residues Glu84–Tyr120. In terms of domain architecture, IF rod spans Glu84–Leu395. Residue Thr110 is modified to Phosphothreonine. The segment at Gln121–Ile138 is linker 1. The interval Glu139–Arg230 is coil 1B. A linker 12 region spans residues Gly231–Ser250. A coil 2 region spans residues Arg251 to Asp392. Residue Lys278 forms a Glycyl lysine isopeptide (Lys-Gly) (interchain with G-Cter in SUMO2) linkage. Residue Thr279 is modified to Phosphothreonine. A Phosphoserine modification is found at Ser323. Residues Ala393–Arg433 form a tail region. Glycyl lysine isopeptide (Lys-Gly) (interchain with G-Cter in SUMO1); alternate cross-links involve residues Lys399, Lys401, and Lys420. Residues Lys399, Lys401, and Lys420 each participate in a glycyl lysine isopeptide (Lys-Gly) (interchain with G-Cter in SUMO2); alternate cross-link.

This sequence belongs to the intermediate filament family. Heterodimer of a type I and a type II keratin. KRT17 associates with KRT6 isomers (KRT6A or KRT6B). Interacts with TRADD and SFN. In terms of processing, phosphorylation at Ser-44 occurs in a growth- and stress-dependent fashion in skin keratinocytes, it has no effect on filament organization.

The protein resides in the cytoplasm. In terms of biological role, type I keratin involved in the formation and maintenance of various skin appendages, specifically in determining shape and orientation of hair. Required for the correct growth of hair follicles, in particular for the persistence of the anagen (growth) state. Modulates the function of TNF-alpha in the specific context of hair cycling. Regulates protein synthesis and epithelial cell growth through binding to the adapter protein SFN and by stimulating Akt/mTOR pathway. Involved in tissue repair. May be a marker of basal cell differentiation in complex epithelia and therefore indicative of a certain type of epithelial 'stem cells'. Acts as a promoter of epithelial proliferation by acting a regulator of immune response in skin: promotes Th1/Th17-dominated immune environment contributing to the development of basaloid skin tumors. May act as an autoantigen in the immunopathogenesis of psoriasis, with certain peptide regions being a major target for autoreactive T-cells and hence causing their proliferation. The sequence is that of Keratin, type I cytoskeletal 17 from Rattus norvegicus (Rat).